The primary structure comprises 254 residues: 3-deoxy-manno-octulosonate cytidylyltransferase (254 aa).

This sequence belongs to the KdsB family.

The protein localises to the cytoplasm. The catalysed reaction is 3-deoxy-alpha-D-manno-oct-2-ulosonate + CTP = CMP-3-deoxy-beta-D-manno-octulosonate + diphosphate. Its pathway is nucleotide-sugar biosynthesis; CMP-3-deoxy-D-manno-octulosonate biosynthesis; CMP-3-deoxy-D-manno-octulosonate from 3-deoxy-D-manno-octulosonate and CTP: step 1/1. The protein operates within bacterial outer membrane biogenesis; lipopolysaccharide biosynthesis. In terms of biological role, activates KDO (a required 8-carbon sugar) for incorporation into bacterial lipopolysaccharide in Gram-negative bacteria. The polypeptide is 3-deoxy-manno-octulosonate cytidylyltransferase (Pseudoalteromonas atlantica (strain T6c / ATCC BAA-1087)).